The primary structure comprises 394 residues: Elongation factor Tu (394 aa).

One can recognise a tr-type G domain in the interval 10–204 (KPHVNVGTIG…AVDEWIPTPE (195 aa)). Residues 19–26 (GHIDHGKT) form a G1 region. 19 to 26 (GHIDHGKT) is a GTP binding site. Residue Thr-26 participates in Mg(2+) binding. A G2 region spans residues 60-64 (GITIN). The interval 81 to 84 (DCPG) is G3. Residues 81–85 (DCPGH) and 136–139 (NKCD) each bind GTP. Positions 136 to 139 (NKCD) are G4. The interval 174 to 176 (SAL) is G5.

The protein belongs to the TRAFAC class translation factor GTPase superfamily. Classic translation factor GTPase family. EF-Tu/EF-1A subfamily. In terms of assembly, monomer.

It localises to the cytoplasm. It carries out the reaction GTP + H2O = GDP + phosphate + H(+). In terms of biological role, GTP hydrolase that promotes the GTP-dependent binding of aminoacyl-tRNA to the A-site of ribosomes during protein biosynthesis. This is Elongation factor Tu from Mycoplasma pneumoniae (strain ATCC 29342 / M129 / Subtype 1) (Mycoplasmoides pneumoniae).